The following is a 452-amino-acid chain: Bifunctional protein GlmU (452 aa).

A pyrophosphorylase region spans residues M1–R225. UDP-N-acetyl-alpha-D-glucosamine contacts are provided by residues L6 to G9, K20, Q71, and G76 to T77. A Mg(2+)-binding site is contributed by D99. The UDP-N-acetyl-alpha-D-glucosamine site is built by G136, E151, N166, and N223. Mg(2+) is bound at residue N223. Residues A226–K246 are linker. Positions G247 to Q452 are N-acetyltransferase. 2 residues coordinate UDP-N-acetyl-alpha-D-glucosamine: R329 and K347. The active-site Proton acceptor is H359. UDP-N-acetyl-alpha-D-glucosamine-binding residues include Y362 and N373. Residues A376, N382 to Y383, S401, A419, and R436 each bind acetyl-CoA.

This sequence in the N-terminal section; belongs to the N-acetylglucosamine-1-phosphate uridyltransferase family. The protein in the C-terminal section; belongs to the transferase hexapeptide repeat family. As to quaternary structure, homotrimer. Mg(2+) serves as cofactor.

The protein localises to the cytoplasm. The enzyme catalyses alpha-D-glucosamine 1-phosphate + acetyl-CoA = N-acetyl-alpha-D-glucosamine 1-phosphate + CoA + H(+). The catalysed reaction is N-acetyl-alpha-D-glucosamine 1-phosphate + UTP + H(+) = UDP-N-acetyl-alpha-D-glucosamine + diphosphate. It participates in nucleotide-sugar biosynthesis; UDP-N-acetyl-alpha-D-glucosamine biosynthesis; N-acetyl-alpha-D-glucosamine 1-phosphate from alpha-D-glucosamine 6-phosphate (route II): step 2/2. It functions in the pathway nucleotide-sugar biosynthesis; UDP-N-acetyl-alpha-D-glucosamine biosynthesis; UDP-N-acetyl-alpha-D-glucosamine from N-acetyl-alpha-D-glucosamine 1-phosphate: step 1/1. The protein operates within bacterial outer membrane biogenesis; LPS lipid A biosynthesis. Functionally, catalyzes the last two sequential reactions in the de novo biosynthetic pathway for UDP-N-acetylglucosamine (UDP-GlcNAc). The C-terminal domain catalyzes the transfer of acetyl group from acetyl coenzyme A to glucosamine-1-phosphate (GlcN-1-P) to produce N-acetylglucosamine-1-phosphate (GlcNAc-1-P), which is converted into UDP-GlcNAc by the transfer of uridine 5-monophosphate (from uridine 5-triphosphate), a reaction catalyzed by the N-terminal domain. This is Bifunctional protein GlmU from Thermodesulfovibrio yellowstonii (strain ATCC 51303 / DSM 11347 / YP87).